A 146-amino-acid chain; its full sequence is Large ribosomal subunit protein uL13 (146 aa).

The interval 125 to 146 (YAGPKHPHAAQQPKVYEPRPRG) is disordered.

The protein belongs to the universal ribosomal protein uL13 family. As to quaternary structure, part of the 50S ribosomal subunit.

In terms of biological role, this protein is one of the early assembly proteins of the 50S ribosomal subunit, although it is not seen to bind rRNA by itself. It is important during the early stages of 50S assembly. The polypeptide is Large ribosomal subunit protein uL13 (Roseiflexus sp. (strain RS-1)).